We begin with the raw amino-acid sequence, 296 residues long: Nucleotide-binding protein M28_Spy0517 (296 aa).

Residue glycine 13–threonine 20 coordinates ATP. Aspartate 63–serine 66 contributes to the GTP binding site.

This sequence belongs to the RapZ-like family.

Displays ATPase and GTPase activities. The chain is Nucleotide-binding protein M28_Spy0517 from Streptococcus pyogenes serotype M28 (strain MGAS6180).